We begin with the raw amino-acid sequence, 241 residues long: Small ribosomal subunit protein eS4 (241 aa).

One can recognise an S4 RNA-binding domain in the interval 37–99 (IPLGLLLRDY…ADLYLRIVPD (63 aa)).

It belongs to the eukaryotic ribosomal protein eS4 family.

In Metallosphaera sedula (strain ATCC 51363 / DSM 5348 / JCM 9185 / NBRC 15509 / TH2), this protein is Small ribosomal subunit protein eS4.